The primary structure comprises 91 residues: ATP synthase subunit c 1 (91 aa).

The next 2 helical transmembrane spans lie at 4 to 24 (FTMCVFGAAIGMAIGTLGTAI) and 53 to 73 (IGLAMIESLAIYALVVCLIIL).

It belongs to the ATPase C chain family. F-type ATPases have 2 components, F(1) - the catalytic core - and F(0) - the membrane proton channel. F(1) has five subunits: alpha(3), beta(3), gamma(1), delta(1), epsilon(1). F(0) has three main subunits: a(1), b(2) and c(10-14). The alpha and beta chains form an alternating ring which encloses part of the gamma chain. F(1) is attached to F(0) by a central stalk formed by the gamma and epsilon chains, while a peripheral stalk is formed by the delta and b chains.

The protein localises to the cell inner membrane. Functionally, f(1)F(0) ATP synthase produces ATP from ADP in the presence of a proton or sodium gradient. F-type ATPases consist of two structural domains, F(1) containing the extramembraneous catalytic core and F(0) containing the membrane proton channel, linked together by a central stalk and a peripheral stalk. During catalysis, ATP synthesis in the catalytic domain of F(1) is coupled via a rotary mechanism of the central stalk subunits to proton translocation. Its function is as follows. Key component of the F(0) channel; it plays a direct role in translocation across the membrane. A homomeric c-ring of between 10-14 subunits forms the central stalk rotor element with the F(1) delta and epsilon subunits. In Pelobacter propionicus (strain DSM 2379 / NBRC 103807 / OttBd1), this protein is ATP synthase subunit c 1.